The following is a 309-amino-acid chain: tRNA pseudouridine synthase B (309 aa).

The Nucleophile role is filled by D51.

This sequence belongs to the pseudouridine synthase TruB family. Type 1 subfamily.

The catalysed reaction is uridine(55) in tRNA = pseudouridine(55) in tRNA. In terms of biological role, responsible for synthesis of pseudouridine from uracil-55 in the psi GC loop of transfer RNAs. This Coxiella burnetii (strain RSA 331 / Henzerling II) protein is tRNA pseudouridine synthase B.